The primary structure comprises 614 residues: Cathepsin F (614 aa).

A signal peptide spans 1–20; sequence MRLFAAATVALVLLLGQAAG. Residues 21–393 constitute a propeptide, activation peptide; the sequence is EELAEERAGQ…AAVVPAYHGE (373 aa). A disordered region spans residues 25-50; the sequence is EERAGQAQGDAESTESSETTTDQAVS. A compositionally biased stretch (low complexity) spans 29-45; the sequence is GQAQGDAESTESSETTT. N-linked (GlcNAc...) asparagine glycosylation occurs at Asn151. Intrachain disulfides connect Cys415/Cys456 and Cys449/Cys489. Cys418 is a catalytic residue. N-linked (GlcNAc...) asparagine glycosylation is found at Asn492 and Asn510. Residues Cys548 and Cys602 are joined by a disulfide bond. Catalysis depends on residues His555 and Asn581.

The protein belongs to the peptidase C1 family.

The catalysed reaction is The recombinant enzyme cleaves synthetic substrates with Phe and Leu (better than Val) in P2, with high specificity constant (kcat/Km) comparable to that of cathepsin L.. Its function is as follows. May have a role in autophagic cell death. The polypeptide is Cathepsin F (Drosophila melanogaster (Fruit fly)).